A 124-amino-acid polypeptide reads, in one-letter code: Small ribosomal subunit protein uS12 (124 aa).

D89 carries the 3-methylthioaspartic acid modification. Positions 105–124 (QGVKNRKQARSKYGAKMEKK) are disordered.

Belongs to the universal ribosomal protein uS12 family. As to quaternary structure, part of the 30S ribosomal subunit. Contacts proteins S8 and S17. May interact with IF1 in the 30S initiation complex.

Its function is as follows. With S4 and S5 plays an important role in translational accuracy. In terms of biological role, interacts with and stabilizes bases of the 16S rRNA that are involved in tRNA selection in the A site and with the mRNA backbone. Located at the interface of the 30S and 50S subunits, it traverses the body of the 30S subunit contacting proteins on the other side and probably holding the rRNA structure together. The combined cluster of proteins S8, S12 and S17 appears to hold together the shoulder and platform of the 30S subunit. The protein is Small ribosomal subunit protein uS12 of Renibacterium salmoninarum (strain ATCC 33209 / DSM 20767 / JCM 11484 / NBRC 15589 / NCIMB 2235).